A 158-amino-acid chain; its full sequence is Acetolactate synthase small subunit (158 aa).

The ACT domain occupies 4 to 79 (MIIAKLHNVT…DVIEVADITD (76 aa)).

This sequence belongs to the acetolactate synthase small subunit family. As to quaternary structure, dimer of large and small chains.

The enzyme catalyses 2 pyruvate + H(+) = (2S)-2-acetolactate + CO2. It functions in the pathway amino-acid biosynthesis; L-isoleucine biosynthesis; L-isoleucine from 2-oxobutanoate: step 1/4. It participates in amino-acid biosynthesis; L-valine biosynthesis; L-valine from pyruvate: step 1/4. The polypeptide is Acetolactate synthase small subunit (ilvH) (Lactococcus lactis subsp. lactis (strain IL1403) (Streptococcus lactis)).